A 411-amino-acid polypeptide reads, in one-letter code: Serine hydroxymethyltransferase (411 aa).

Residues L113 and 117 to 119 (GHL) contribute to the (6S)-5,6,7,8-tetrahydrofolate site. K222 carries the N6-(pyridoxal phosphate)lysine modification. (6S)-5,6,7,8-tetrahydrofolate is bound by residues E238 and 346–348 (SPF).

This sequence belongs to the SHMT family. As to quaternary structure, homodimer. The cofactor is pyridoxal 5'-phosphate.

The protein localises to the cytoplasm. It catalyses the reaction (6R)-5,10-methylene-5,6,7,8-tetrahydrofolate + glycine + H2O = (6S)-5,6,7,8-tetrahydrofolate + L-serine. Its pathway is one-carbon metabolism; tetrahydrofolate interconversion. The protein operates within amino-acid biosynthesis; glycine biosynthesis; glycine from L-serine: step 1/1. Catalyzes the reversible interconversion of serine and glycine with tetrahydrofolate (THF) serving as the one-carbon carrier. This reaction serves as the major source of one-carbon groups required for the biosynthesis of purines, thymidylate, methionine, and other important biomolecules. Also exhibits THF-independent aldolase activity toward beta-hydroxyamino acids, producing glycine and aldehydes, via a retro-aldol mechanism. The sequence is that of Serine hydroxymethyltransferase from Prochlorococcus marinus (strain NATL1A).